We begin with the raw amino-acid sequence, 635 residues long: Threonine--tRNA ligase (635 aa).

Residues 1–61 (MVSIRLPDGS…DRDASLAIVT (61 aa)) form the TGS domain. The segment at 242-533 (DHRKLGKQLD…LIEHHAGAMP (292 aa)) is catalytic. Zn(2+) contacts are provided by C333, H384, and H510.

Belongs to the class-II aminoacyl-tRNA synthetase family. Homodimer. Zn(2+) is required as a cofactor.

It is found in the cytoplasm. It carries out the reaction tRNA(Thr) + L-threonine + ATP = L-threonyl-tRNA(Thr) + AMP + diphosphate + H(+). Catalyzes the attachment of threonine to tRNA(Thr) in a two-step reaction: L-threonine is first activated by ATP to form Thr-AMP and then transferred to the acceptor end of tRNA(Thr). Also edits incorrectly charged L-seryl-tRNA(Thr). The sequence is that of Threonine--tRNA ligase from Burkholderia pseudomallei (strain 1106a).